The primary structure comprises 221 residues: Probable molybdenum cofactor guanylyltransferase (221 aa).

GTP is bound by residues 17–19 (LAG), Lys29, Asp74, and Asp103. Asp103 is a Mg(2+) binding site.

Belongs to the MobA family. The cofactor is Mg(2+).

The protein resides in the cytoplasm. It carries out the reaction Mo-molybdopterin + GTP + H(+) = Mo-molybdopterin guanine dinucleotide + diphosphate. Transfers a GMP moiety from GTP to Mo-molybdopterin (Mo-MPT) cofactor (Moco or molybdenum cofactor) to form Mo-molybdopterin guanine dinucleotide (Mo-MGD) cofactor. This Peptoclostridium acidaminophilum (Eubacterium acidaminophilum) protein is Probable molybdenum cofactor guanylyltransferase.